A 378-amino-acid polypeptide reads, in one-letter code: Succinyl-diaminopimelate desuccinylase (378 aa).

Residue His66 participates in Zn(2+) binding. Asp68 is a catalytic residue. Asp99 is a binding site for Zn(2+). Glu133 (proton acceptor) is an active-site residue. Zn(2+) contacts are provided by Glu134, Glu162, and His348.

It belongs to the peptidase M20A family. DapE subfamily. Homodimer. Requires Zn(2+) as cofactor. Co(2+) serves as cofactor.

The catalysed reaction is N-succinyl-(2S,6S)-2,6-diaminopimelate + H2O = (2S,6S)-2,6-diaminopimelate + succinate. It participates in amino-acid biosynthesis; L-lysine biosynthesis via DAP pathway; LL-2,6-diaminopimelate from (S)-tetrahydrodipicolinate (succinylase route): step 3/3. In terms of biological role, catalyzes the hydrolysis of N-succinyl-L,L-diaminopimelic acid (SDAP), forming succinate and LL-2,6-diaminopimelate (DAP), an intermediate involved in the bacterial biosynthesis of lysine and meso-diaminopimelic acid, an essential component of bacterial cell walls. The chain is Succinyl-diaminopimelate desuccinylase from Halorhodospira halophila (strain DSM 244 / SL1) (Ectothiorhodospira halophila (strain DSM 244 / SL1)).